A 144-amino-acid polypeptide reads, in one-letter code: Gonadotropin subunit beta-2 (144 aa).

An N-terminal signal peptide occupies residues 1 to 27 (MGTPVKILVVRNHILFSVVVLLAVAQS). 6 disulfide bridges follow: cysteine 33–cysteine 81, cysteine 47–cysteine 96, cysteine 50–cysteine 134, cysteine 58–cysteine 112, cysteine 62–cysteine 114, and cysteine 117–cysteine 124. An N-linked (GlcNAc...) asparagine glycan is attached at asparagine 37. A propeptide spanning residues 143 to 144 (VY) is cleaved from the precursor.

This sequence belongs to the glycoprotein hormones subunit beta family. Heterodimer of an alpha and a beta chain.

It is found in the secreted. In terms of biological role, involved in gametogenesis and steroidogenesis. This chain is Gonadotropin subunit beta-2 (cgbb), found in Cyprinus carpio (Common carp).